The chain runs to 256 residues: Omega-amidase YafV (256 aa).

The CN hydrolase domain maps to 4-234 (LKITLLQQPL…ATRIDAELSM (231 aa)). The active-site Proton acceptor is the Glu-42. Residue Lys-107 is the Proton donor of the active site. Residue Cys-141 is the Nucleophile of the active site.

Belongs to the carbon-nitrogen hydrolase superfamily. NIT1/NIT2 family.

It catalyses the reaction a monoamide of a dicarboxylate + H2O = a dicarboxylate + NH4(+). Hydrolyzes alpha-ketoglutaramate (a-KGM) to alpha-ketoglutarate (alpha-KG) and ammonia, has weak activity on L-glutamine, almost no activity on deaminated glutathione (dGSH) and none on glutathione. May function as a metabolite repair enzyme. This chain is Omega-amidase YafV (yafV), found in Escherichia coli (strain K12).